A 98-amino-acid chain; its full sequence is NADH-ubiquinone oxidoreductase chain 4L (98 aa).

The next 3 membrane-spanning stretches (helical) occupy residues 1-21 (MPII…GMLV), 29-49 (SLLC…LMAL), and 61-81 (IALL…LVSI).

The protein belongs to the complex I subunit 4L family. Core subunit of respiratory chain NADH dehydrogenase (Complex I) which is composed of 45 different subunits.

The protein localises to the mitochondrion inner membrane. The catalysed reaction is a ubiquinone + NADH + 5 H(+)(in) = a ubiquinol + NAD(+) + 4 H(+)(out). Core subunit of the mitochondrial membrane respiratory chain NADH dehydrogenase (Complex I) which catalyzes electron transfer from NADH through the respiratory chain, using ubiquinone as an electron acceptor. Part of the enzyme membrane arm which is embedded in the lipid bilayer and involved in proton translocation. The protein is NADH-ubiquinone oxidoreductase chain 4L (MT-ND4L) of Piliocolobus badius (Western red colobus).